A 453-amino-acid polypeptide reads, in one-letter code: Signal transduction histidine-protein kinase ArlS (453 aa).

Helical transmembrane passes span Ile-14–Leu-34 and Phe-157–Phe-177. An HAMP domain is found at Thr-179–Asn-232. Residues Asp-240–Lys-453 form the Histidine kinase domain. Phosphohistidine; by autocatalysis is present on His-243.

Post-translationally, autophosphorylated.

The protein localises to the cell membrane. It catalyses the reaction ATP + protein L-histidine = ADP + protein N-phospho-L-histidine.. Member of the two-component regulatory system ArlS/ArlR. ArlS probably functions as a sensor protein kinase which is autophosphorylated at a histidine residue and transfers its phosphate group to ArlR. The chain is Signal transduction histidine-protein kinase ArlS (arlS) from Staphylococcus haemolyticus (strain JCSC1435).